Here is a 215-residue protein sequence, read N- to C-terminus: Sodium channel regulatory subunit beta-3 (215 aa).

The N-terminal stretch at 1 to 24 (MPAFNRLLPLASLVLIYWVRVCFP) is a signal peptide. Residues 25 to 138 (VCVEVPSETE…EAHRPFVKTT (114 aa)) form the Ig-like C2-type domain. At 25 to 156 (VCVEVPSETE…EEAGEDFTSV (132 aa)) the chain is on the extracellular side. Disulfide bonds link C26–C48 and C45–C120. N95, N109, N113, and N121 each carry an N-linked (GlcNAc...) asparagine glycan. The helical transmembrane segment at 157–178 (VSEIMMYILLVFLTLWLFIEMI) threads the bilayer. Residues 179-215 (YCYRKVSKAEEAAQENASDYLAIPSENKENSVVPVEE) are Cytoplasmic-facing.

This sequence belongs to the sodium channel auxiliary subunit SCN3B (TC 8.A.17) family. A voltage-gated sodium (Nav) channel consists of an ion-conducting pore-forming alpha subunit functional on its own that is regulated by one or more beta subunits. Forms homodimers and homotrimers. SCN3B is non-covalently associated with alpha subunits and induces the formation of alpha subunit oligomers, including trimers. Interacts with SCN5A/Nav1.5; regulatory subunit of SCN5A/Nav1.5. Interacts with SCN7A/Nav2.1; probable regulatory subunit of SCN7A/Nav2.1. Interacts with SCN10A; regulatory subunit of SCN10A/Nav1.8. Interacts with NFASC; probably involved in targeting the sodium channels to the nodes of Ranvier. In terms of processing, intramolecular disulfide bonds favor the voltage-gated sodium channel oligomeric complex assembly. N-glycosylated.

The protein localises to the cell membrane. Regulatory subunit of multiple voltage-gated sodium (Nav) channels directly mediating the depolarization of excitable membranes. Navs, also called VGSCs (voltage-gated sodium channels) or VDSCs (voltage-dependent sodium channels), operate by switching between closed and open conformations depending on the voltage difference across the membrane. In the open conformation they allow Na(+) ions to selectively pass through the pore, along their electrochemical gradient. The influx of Na+ ions provokes membrane depolarization, initiating the propagation of electrical signals throughout cells and tissues. The accessory beta subunits participate in localization and functional modulation of the Nav channels. Modulates the activity of SCN2A/Nav1.2, causing a hyperpolarizing shift in the voltage-dependence of inactivation of the channel and increasing the fraction of channels operating in the fast gating mode. Modulates the activity of SCN5A/Nav1.5. Could also regulate the atypical sodium channel SCN7A/Nav2.1. Modulates the activity of SCN10A/Nav1.8, regulating its oligomerization and accelerating the recovery from inactivation. The polypeptide is Sodium channel regulatory subunit beta-3 (Mus musculus (Mouse)).